The sequence spans 129 residues: UPF0325 protein ECA1027 (129 aa).

This sequence belongs to the UPF0325 family.

This is UPF0325 protein ECA1027 from Pectobacterium atrosepticum (strain SCRI 1043 / ATCC BAA-672) (Erwinia carotovora subsp. atroseptica).